The sequence spans 828 residues: Auxin response factor 2B (828 aa).

Residues F128 to M230 constitute a DNA-binding region (TF-B3). Disordered regions lie at residues P348–K397, E681–R703, and N791–S828. Over residues L360–I370 the composition is skewed to pro residues. Positions V380–L390 are enriched in polar residues. In terms of domain architecture, PB1 spans R703 to E786. Residues N791–A806 show a composition bias toward polar residues.

The protein belongs to the ARF family. As to quaternary structure, homodimers and heterodimers. Expressed in root, leaf and stem. Also expressed in flower and fruit. Expressed in flower buds about three days before opening including stamen, petal and sepal with the highest in ovary.

The protein resides in the nucleus. Its function is as follows. Auxin response factors (ARFs) are transcriptional factors that binds specifically to the DNA sequence 5'-TGTCTC-3' found in the auxin-responsive promoter elements (AuxREs). Could act as transcriptional activator or repressor. Involved in the control of fruit ripening process. Regulates expression of a number of ripening regulators, transcription factors, and ethylene biosynthesis and signaling components. May act as a transcriptional repressor of auxin-responsive genes. This chain is Auxin response factor 2B, found in Solanum lycopersicum (Tomato).